A 700-amino-acid chain; its full sequence is DNA ligase (700 aa).

NAD(+) contacts are provided by residues 61-65 (DAEYD), 110-111 (SL), and E141. The N6-AMP-lysine intermediate role is filled by K143. 4 residues coordinate NAD(+): R164, E202, K321, and K345. Residues C439, C442, C457, and C462 each coordinate Zn(2+). In terms of domain architecture, BRCT spans 619–700 (AVSNKLAGLQ…EFLRLLEDSK (82 aa)).

It belongs to the NAD-dependent DNA ligase family. LigA subfamily. Mg(2+) is required as a cofactor. It depends on Mn(2+) as a cofactor.

It carries out the reaction NAD(+) + (deoxyribonucleotide)n-3'-hydroxyl + 5'-phospho-(deoxyribonucleotide)m = (deoxyribonucleotide)n+m + AMP + beta-nicotinamide D-nucleotide.. DNA ligase that catalyzes the formation of phosphodiester linkages between 5'-phosphoryl and 3'-hydroxyl groups in double-stranded DNA using NAD as a coenzyme and as the energy source for the reaction. It is essential for DNA replication and repair of damaged DNA. The sequence is that of DNA ligase from Hydrogenobaculum sp. (strain Y04AAS1).